Consider the following 219-residue polypeptide: Protein RhiB (219 aa).

The segment covering 174-195 has biased composition (polar residues); sequence AGISQQGNAAGTSISSKSTGSP. The segment at 174-201 is disordered; that stretch reads AGISQQGNAAGTSISSKSTGSPENPART.

Functionally, may be involved in plant-microbe interaction. The chain is Protein RhiB (rhiB) from Rhizobium leguminosarum bv. viciae.